A 344-amino-acid polypeptide reads, in one-letter code: Methylthioribose-1-phosphate isomerase (344 aa).

Residues 55–57 (RGA), Arg98, and Gln202 each bind substrate. The active-site Proton donor is the Asp243. 253–254 (NK) is a substrate binding site.

It belongs to the eIF-2B alpha/beta/delta subunits family. MtnA subfamily.

The catalysed reaction is 5-(methylsulfanyl)-alpha-D-ribose 1-phosphate = 5-(methylsulfanyl)-D-ribulose 1-phosphate. Its pathway is amino-acid biosynthesis; L-methionine biosynthesis via salvage pathway; L-methionine from S-methyl-5-thio-alpha-D-ribose 1-phosphate: step 1/6. Catalyzes the interconversion of methylthioribose-1-phosphate (MTR-1-P) into methylthioribulose-1-phosphate (MTRu-1-P). The chain is Methylthioribose-1-phosphate isomerase from Gemmatimonas aurantiaca (strain DSM 14586 / JCM 11422 / NBRC 100505 / T-27).